The sequence spans 185 residues: MNVSHPAVHPVGVPPALGGHAVPPRMRMRVRMEYLVFQGMPLPGTLGGLVLRLGQFCSALIAFSVMLSVRDFSVTAFCYLVAATVLQCLWSLAMAVIDVYALLVKRSLRNPLLVSIFVVGDGVTATLTFAAACASAGVIVLIGNDIAMCKDNPCANYEAAIIMAFLSWFMVSISFILTFWLLATL.

Topologically, residues 1-45 (MNVSHPAVHPVGVPPALGGHAVPPRMRMRVRMEYLVFQGMPLPGT) are cytoplasmic. A helical membrane pass occupies residues 46 to 66 (LGGLVLRLGQFCSALIAFSVM). Residues 67-76 (LSVRDFSVTA) lie on the Extracellular side of the membrane. A helical membrane pass occupies residues 77 to 97 (FCYLVAATVLQCLWSLAMAVI). The Cytoplasmic segment spans residues 98 to 121 (DVYALLVKRSLRNPLLVSIFVVGD). Residues 122 to 142 (GVTATLTFAAACASAGVIVLI) traverse the membrane as a helical segment. Residues 143–160 (GNDIAMCKDNPCANYEAA) lie on the Extracellular side of the membrane. A helical transmembrane segment spans residues 161-181 (IIMAFLSWFMVSISFILTFWL). Topologically, residues 182–185 (LATL) are cytoplasmic.

The protein belongs to the Casparian strip membrane proteins (CASP) family. In terms of assembly, homodimer and heterodimers.

Its subcellular location is the cell membrane. This Picea sitchensis (Sitka spruce) protein is CASP-like protein 5A1.